The chain runs to 84 residues: Exodeoxyribonuclease 7 small subunit (84 aa).

It belongs to the XseB family. As to quaternary structure, heterooligomer composed of large and small subunits.

The protein resides in the cytoplasm. It carries out the reaction Exonucleolytic cleavage in either 5'- to 3'- or 3'- to 5'-direction to yield nucleoside 5'-phosphates.. In terms of biological role, bidirectionally degrades single-stranded DNA into large acid-insoluble oligonucleotides, which are then degraded further into small acid-soluble oligonucleotides. The chain is Exodeoxyribonuclease 7 small subunit from Bartonella quintana (strain Toulouse) (Rochalimaea quintana).